The following is a 407-amino-acid chain: Arrestin red cell isoform 1 (407 aa).

Belongs to the arrestin family.

It is found in the cytoplasm. The sequence is that of Arrestin red cell isoform 1 from Oncorhynchus mykiss (Rainbow trout).